The chain runs to 263 residues: Tryptophan 2,3-dioxygenase (263 aa).

Residues 32–36 (FIIVH), Tyr-94, and Arg-98 contribute to the substrate site. A heme-binding site is contributed by His-221. Substrate is bound at residue Thr-235.

This sequence belongs to the tryptophan 2,3-dioxygenase family. In terms of assembly, homotetramer. Heme serves as cofactor.

It catalyses the reaction L-tryptophan + O2 = N-formyl-L-kynurenine. It functions in the pathway amino-acid degradation; L-tryptophan degradation via kynurenine pathway; L-kynurenine from L-tryptophan: step 1/2. Its function is as follows. Heme-dependent dioxygenase that catalyzes the oxidative cleavage of the L-tryptophan (L-Trp) pyrrole ring and converts L-tryptophan to N-formyl-L-kynurenine. Catalyzes the oxidative cleavage of the indole moiety. In Erythrobacter litoralis (strain HTCC2594), this protein is Tryptophan 2,3-dioxygenase.